A 169-amino-acid polypeptide reads, in one-letter code: Cyclic pyranopterin monophosphate synthase (169 aa).

Residues 83–85 (LCH) and 121–122 (ME) contribute to the substrate site. The active site involves D136.

Belongs to the MoaC family. As to quaternary structure, homohexamer; trimer of dimers.

The enzyme catalyses (8S)-3',8-cyclo-7,8-dihydroguanosine 5'-triphosphate = cyclic pyranopterin phosphate + diphosphate. The protein operates within cofactor biosynthesis; molybdopterin biosynthesis. In terms of biological role, catalyzes the conversion of (8S)-3',8-cyclo-7,8-dihydroguanosine 5'-triphosphate to cyclic pyranopterin monophosphate (cPMP). This is Cyclic pyranopterin monophosphate synthase from Rhodospirillum centenum (strain ATCC 51521 / SW).